We begin with the raw amino-acid sequence, 146 residues long: Cyanate hydratase (146 aa).

Residues Arg-87, Glu-90, and Ser-113 contribute to the active site.

This sequence belongs to the cyanase family.

It catalyses the reaction cyanate + hydrogencarbonate + 3 H(+) = NH4(+) + 2 CO2. Functionally, catalyzes the reaction of cyanate with bicarbonate to produce ammonia and carbon dioxide. This is Cyanate hydratase from Synechococcus elongatus (strain ATCC 33912 / PCC 7942 / FACHB-805) (Anacystis nidulans R2).